We begin with the raw amino-acid sequence, 255 residues long: Tryptophan synthase alpha chain (255 aa).

Residues Glu42 and Asp53 each act as proton acceptor in the active site.

This sequence belongs to the TrpA family. As to quaternary structure, tetramer of two alpha and two beta chains.

It carries out the reaction (1S,2R)-1-C-(indol-3-yl)glycerol 3-phosphate + L-serine = D-glyceraldehyde 3-phosphate + L-tryptophan + H2O. The protein operates within amino-acid biosynthesis; L-tryptophan biosynthesis; L-tryptophan from chorismate: step 5/5. Functionally, the alpha subunit is responsible for the aldol cleavage of indoleglycerol phosphate to indole and glyceraldehyde 3-phosphate. In Wolinella succinogenes (strain ATCC 29543 / DSM 1740 / CCUG 13145 / JCM 31913 / LMG 7466 / NCTC 11488 / FDC 602W) (Vibrio succinogenes), this protein is Tryptophan synthase alpha chain.